A 313-amino-acid chain; its full sequence is Probable cell division protein WhiA (313 aa).

Positions 275-308 (SLRELGELAQPPLSKSCVNHRLRKLEQIAEHILA) form a DNA-binding region, H-T-H motif.

It belongs to the WhiA family.

Functionally, involved in cell division and chromosome segregation. The polypeptide is Probable cell division protein WhiA (Desulforudis audaxviator (strain MP104C)).